The chain runs to 738 residues: Sporulation kinase E (738 aa).

PAS domains follow at residues 29–99 (ELNQ…FKKG), 150–220 (NEQL…NRKG), 271–342 (SEER…YGEI), and 391–462 (SELK…FDEM). Residues 523–729 (GIAHEIRNPM…VFHITLPVRQ (207 aa)) form the Histidine kinase domain. His526 is subject to Phosphohistidine; by autocatalysis.

The catalysed reaction is ATP + protein L-histidine = ADP + protein N-phospho-L-histidine.. Phosphorylates the sporulation-regulatory protein spo0A under biofilm growth conditions. Also able to weakly phosphorylate spo0F. The polypeptide is Sporulation kinase E (kinE) (Bacillus subtilis (strain 168)).